The sequence spans 298 residues: Glyoxalase domain-containing protein 4 (298 aa).

A VOC 1 domain is found at 5 to 130 (RALHFVFKVK…GGYKFYLQDR (126 aa)). Lys109 carries the N6-succinyllysine modification. The residue at position 131 (Ser131) is a Phosphoserine. The region spanning 137–258 (PVLKVTLAVS…DGHEICFVGD (122 aa)) is the VOC 2 domain. Lys273 is subject to N6-succinyllysine.

Belongs to the glyoxalase I family. Interacts with NUDT9.

Its subcellular location is the mitochondrion. In Mus musculus (Mouse), this protein is Glyoxalase domain-containing protein 4 (Glod4).